The chain runs to 136 residues: MKISLSTSLFSIEQKVEYFNLNYQSLSDFSVVAKLNYTFTWYGNDFSIGFAPKKGEKLYFDLFFTFKASPNHPFAAENFKPDSEAIDFYVSFSWRLEGKDEVSKKLFELSVFGRARAFQIDDYKINLFSYLVYVIR.

Belongs to the MG439/MG440 family.

This is an uncharacterized protein from Mycoplasma pneumoniae (strain ATCC 29342 / M129 / Subtype 1) (Mycoplasmoides pneumoniae).